Consider the following 609-residue polypeptide: UvrABC system protein C (609 aa).

The 79-residue stretch at Ser16–Val94 folds into the GIY-YIG domain. Residues Gln203–Val238 form the UVR domain.

It belongs to the UvrC family. In terms of assembly, interacts with UvrB in an incision complex.

It is found in the cytoplasm. The UvrABC repair system catalyzes the recognition and processing of DNA lesions. UvrC both incises the 5' and 3' sides of the lesion. The N-terminal half is responsible for the 3' incision and the C-terminal half is responsible for the 5' incision. The polypeptide is UvrABC system protein C (Shewanella pealeana (strain ATCC 700345 / ANG-SQ1)).